The sequence spans 1617 residues: MIPHSSAGVQSWGQPLYAVYTGTGRADLSQPLGQPDRQSEQPSMPVAQTQGRPPALIDLTANDGDVLEREPPAKRLKIDVHAGSVANDGSPASAGVGESKSTPGATTSKPPSLSWRARPVWSFQSLLSEIPGSAEINGESAAGVVQDLKPPPPPSFSGPPWKFAPTDIIASDSAGEQDGASAKEVQTTPYHIETPSVAPVIRGEKVADFSPWMGNHPEDVLNEQTAKQGYYDRTQVSQNESNTARPSLYAQLKHRSGLQILSSVFAAALEKRQGHNMVTAPSTFKPPPRVTLTDNKREAWLRDLANPNVPLRKLSRTIPHGIRGRVLLDQCLTKWVPVGRAVWLAKCVGANEIRAFKRKGTSGALTIGLEAKWVRDWTANVQQFLEGVITSCGVADWKMKVTYAVNLTSRLFFEQLLDHDQYLEWFLTSLEAAPFNTLPVWLLMLGIYWSNILRYRKRGRRLAELLLDKLQLAIKSDSAPSLRPLIDRLSLHIRKLTLEHTSSMVLPQSWEKYKDLLSSCLNLNDNVHRTVFQILAERNARVQKPPKCEGTTQQPPQQRVIQLFDSICSSHDITSVSAASLRAIDDKAALVLKLLEWAATPFRYGVSRVYTGARLLRKWKIAGVDVDTCIISFLGESQMSDQLNMDNVYHIVSELVRSQTFSVGKYLQWLMAKGVADFSRSSDHQPLSGDLALLVQLPVSRLPEHVHNLRNTLLHRAGVEPSKEASTIAILKASIAERLPRIFGSVATSAVSCDPLPSDLTWTVKSELGQWIRRGVTEFGRDPRRAFQGLHSTTSAEHFALTPGEFYTVRDILESFGDLSILADVLKQATVCNDGIVLASAADTVNYHFRSFCVIGATTDLFKRLVEAYARLKRLGSTSLDLIFSLIDLGLRLPGELNTVALLRQDLSRIESKSSMAAPSPLSDHIPSSFNENDPLFLLKLDQLLSSASGIDESTLDTIFNVLIKQLESSGGHAKFSVNEICRYLSYLRPFHPKRFDTMIVRWVCGLLRSSTGGILSQVLPPLIGVGCVTIQAFVFLVRRLLKSDNKISNQRDLRIDLLQLLVPPPAGQSRYFDLVTYRFHLSRKEFLFKHPEEAFDIIRDAIALIDSESQEGNYRQVDLGHSAMVLLQILLTKNPESAVRHCSEKLIGQHPSAVTVLTRALDSLLGLDSKAGGHLFTSNDTFIFIPIDTGPATPDISVAEKVIELTNDFSLPFCQLKLQLLFNAESKGNVRNEIVDVMFKAAVADSRSRRSNWVGLVSLMSHDAVRQVKCHDIRERAEKNFFATPLFEESPDGCSSFAADNSSSLEAAKLYLAIIEKLAYSIPDVGPQAVVPVLTEKLDLLLQRLISMQASCSGTTELSHGVDAEQMIRSRTQFERALAFWFSALLRMIVLHRTAFSVPSAAVRPNALPEQTRLLISIFCISLARLPDSVLRLFPAADYFPHSMRAADCRPCPGILLQTHALDVAASLIDMFPDEARHQCARYLREKCPPFARVQNDSRFLYLLGPLGDSPSSNITLPVSIPSPAASGSTPAPTPSGNSTGGFSHPQQPAFVSGVPPGLPDGLNCAASHLCLQYRGRVIGAYPVRPWELLEDAAPIAGTNDTAVSLGYFDARRVRV.

2 disordered regions span residues 25–114 and 1519–1552; these read RADL…PSLS and PVSIPSPAASGSTPAPTPSGNSTGGFSHPQQPAF. Residues 40–51 show a composition bias toward polar residues; sequence EQPSMPVAQTQG. The span at 66 to 80 shows a compositional bias: basic and acidic residues; that stretch reads VLEREPPAKRLKIDV. Over residues 99–111 the composition is skewed to polar residues; that stretch reads SKSTPGATTSKPP. Low complexity predominate over residues 1523–1543; sequence PSPAASGSTPAPTPSGNSTGG.

This sequence belongs to the Mediator complex subunit 12 family. Component of the srb8-11 complex, which itself associates with the Mediator complex.

The protein resides in the nucleus. Component of the srb8-11 complex. The srb8-11 complex is a regulatory module of the Mediator complex which is itself involved in regulation of basal and activated RNA polymerase II-dependent transcription. The srb8-11 complex may be involved in the transcriptional repression of a subset of genes regulated by Mediator. It may inhibit the association of the Mediator complex with RNA polymerase II to form the holoenzyme complex. In Aspergillus fumigatus (strain ATCC MYA-4609 / CBS 101355 / FGSC A1100 / Af293) (Neosartorya fumigata), this protein is Mediator of RNA polymerase II transcription subunit 12 (srb8).